We begin with the raw amino-acid sequence, 710 residues long: MPVRRYGGRYNNSSPGVSNALSPSTTAGRPLSPSPAAGSKLASTHHDPVPQEAYYVNDEADARHQQQAPFREPSVEVEVEMIDDEPPHGSQKPLSVAPYTANASNSSGRSKRNAITASGYTFYTNERQKTVYEALRSLRPLAELQEPRRVKEYAETSLKDSLYRIIEAHDVIMVAGAFFGDEGKGKTVDAVAHHPLCTCIARVNSGENAGHTVYDKAGRKFVFNLAPSGLLLPGKRNYIGPECVMDPVSFMEKEVIQLIDAGIDYRDRLFIGNVCIVTPYHKLLDLLGSAANSSTLKGMAPVHGSKVMKRGIRLDHIFNDDETLRKRLEKDMDTYLGLLKVKNLSDADVVRLCREENSDGVVRVPDYVIAFAQAKVKVEFLVKLYRDRVRHNPDFPARCDVTYELHAAVLRGEKVLLEGPQSYWLSNARTKFWESTTSADTTAAGLLAASQLNFQKFKSVVLNVHKAPGSSRVGIGACPSSFVPQDYFSAQNIKTLRDLPSETCANFEAVQRTLFRDGFPHSNDKARHNGIMAPVEYSDETGKYNIGVAMAIASAQHHGECGAVTKKPRVCGFFDCVLQHEVNSIQGPYLTISALDRGDEYDKVGVTIAYVYYNPEGKQVDVNGHVYKNGDIIRAGDPVPSEPALYHCHPIVKLIDGWRDNPIAAAKRRRNAPLPRGVCELLSTIEYFTNCKILSIGNGPNGDDIIYLRQ.

Disordered regions lie at residues 1 to 53 (MPVR…PQEA) and 84 to 110 (DEPP…SGRS). Polar residues-rich tracts occupy residues 10–27 (YNNS…STTA) and 101–110 (ANASNSSGRS). GTP-binding positions include 180–186 (GDEGKGK) and 210–212 (GHT). Asp-181 (proton acceptor) is an active-site residue. The Mg(2+) site is built by Asp-181 and Gly-210. Residues 181–184 (DEGK), 208–211 (NAGH), Thr-295, Lys-309, Gln-421, Thr-437, and Lys-567 each bind IMP. Catalysis depends on His-211, which acts as the Proton donor. 563 to 569 (AVTKKPR) contributes to the substrate binding site. GTP-binding positions include Arg-569 and 697–699 (GNG).

Belongs to the adenylosuccinate synthetase family. As to quaternary structure, homodimer. It depends on Mg(2+) as a cofactor.

The protein localises to the cytoplasm. It carries out the reaction IMP + L-aspartate + GTP = N(6)-(1,2-dicarboxyethyl)-AMP + GDP + phosphate + 2 H(+). Its pathway is purine metabolism; AMP biosynthesis via de novo pathway; AMP from IMP: step 1/2. Plays an important role in the salvage pathway for purine nucleotide biosynthesis. Catalyzes the first committed step in the biosynthesis of AMP from IMP. This chain is Adenylosuccinate synthetase (ADSS), found in Leishmania donovani.